We begin with the raw amino-acid sequence, 351 residues long: D-alanine--D-alanine ligase (351 aa).

Positions 135-344 (KMAFAQAGLP…FAELVDQLIQ (210 aa)) constitute an ATP-grasp domain. 171-226 (EQRLGYPCFVKPANLGSSVGIAKVRSRSELEKALDSAASYDRRIVIETGVKAREVE) serves as a coordination point for ATP. Mg(2+)-binding residues include Asp297, Glu311, and Asn313.

Belongs to the D-alanine--D-alanine ligase family. The cofactor is Mg(2+). It depends on Mn(2+) as a cofactor.

The protein resides in the cytoplasm. It catalyses the reaction 2 D-alanine + ATP = D-alanyl-D-alanine + ADP + phosphate + H(+). Its pathway is cell wall biogenesis; peptidoglycan biosynthesis. Its function is as follows. Cell wall formation. This chain is D-alanine--D-alanine ligase, found in Rippkaea orientalis (strain PCC 8801 / RF-1) (Cyanothece sp. (strain PCC 8801)).